Consider the following 190-residue polypeptide: Large ribosomal subunit protein bL25 (190 aa).

The protein belongs to the bacterial ribosomal protein bL25 family. CTC subfamily. As to quaternary structure, part of the 50S ribosomal subunit; part of the 5S rRNA/L5/L18/L25 subcomplex. Contacts the 5S rRNA. Binds to the 5S rRNA independently of L5 and L18.

Its function is as follows. This is one of the proteins that binds to the 5S RNA in the ribosome where it forms part of the central protuberance. In Neisseria gonorrhoeae (strain ATCC 700825 / FA 1090), this protein is Large ribosomal subunit protein bL25.